The sequence spans 397 residues: MRYITTHPNEISTQIWNNFSSTEIWSNFSAAKNETQPIRRNQDLANAEVITLAVVIIITVIGNSIVLITLFQRRKKLTRMHLFILHLSVTDLFVAFFNNLPQMIWDITFLFLGTDLLCRLVTYLQSVAMYASSYVLVATAIDRYFAICHPLSSHKWTTARVHVMVFIAWMLSFLFSTPQLFIWSMQFSNIGLTCQATFDPEWTLKFYITWLTVAIWILPTIALTLFYGMMCFAVWKRGRSTLGSSRTRNRSFLTNRVSTRIGQSHLARGFSEEDMEGQSVNYNRGISRAKVRSVALTLSVVACCFICWSPFFVCQMWAAWDENAPYSGAIYTILLLLSSLNSCTNPWIYMIFSVFQHRAKTSRFVNDEETTSVTVLSSRNDIRLMSMKKKLEQTARN.

Residues 1-48 are Extracellular-facing; that stretch reads MRYITTHPNEISTQIWNNFSSTEIWSNFSAAKNETQPIRRNQDLANAE. N-linked (GlcNAc...) asparagine glycosylation is found at asparagine 18, asparagine 27, and asparagine 33. The helical transmembrane segment at 49–69 threads the bilayer; it reads VITLAVVIIITVIGNSIVLIT. Residues 70-91 are Cytoplasmic-facing; sequence LFQRRKKLTRMHLFILHLSVTD. The chain crosses the membrane as a helical span at residues 92-112; sequence LFVAFFNNLPQMIWDITFLFL. Over 113–120 the chain is Extracellular; that stretch reads GTDLLCRL. A disulfide bridge links cysteine 118 with cysteine 194. The chain crosses the membrane as a helical span at residues 121–141; that stretch reads VTYLQSVAMYASSYVLVATAI. At 142–162 the chain is on the cytoplasmic side; sequence DRYFAICHPLSSHKWTTARVH. Residues 163–183 form a helical membrane-spanning segment; it reads VMVFIAWMLSFLFSTPQLFIW. Topologically, residues 184–205 are extracellular; that stretch reads SMQFSNIGLTCQATFDPEWTLK. A helical transmembrane segment spans residues 206–226; the sequence is FYITWLTVAIWILPTIALTLF. Over 227–293 the chain is Cytoplasmic; it reads YGMMCFAVWK…RGISRAKVRS (67 aa). A helical transmembrane segment spans residues 294 to 314; it reads VALTLSVVACCFICWSPFFVC. The Extracellular segment spans residues 315–331; it reads QMWAAWDENAPYSGAIY. The helical transmembrane segment at 332-352 threads the bilayer; it reads TILLLLSSLNSCTNPWIYMIF. Residues 353–397 are Cytoplasmic-facing; that stretch reads SVFQHRAKTSRFVNDEETTSVTVLSSRNDIRLMSMKKKLEQTARN.

Belongs to the G-protein coupled receptor 1 family. Vasopressin/oxytocin receptor subfamily. As to expression, present in brain, buccal ganglion, gastric ganglion, olfactory lube, peduncle lobe, optical lobe, pancreas, the oviduct and the ovary.

The protein localises to the cell membrane. Functionally, acts as a receptor for cephalotocin. The polypeptide is Cephalotocin receptor 1 (Octopus vulgaris (Common octopus)).